A 190-amino-acid chain; its full sequence is Translation machinery-associated protein 22 (190 aa).

A disordered region spans residues 63 to 83 (LNVSGTKDSNAEEQPAKLTKE). In terms of domain architecture, SUI1 spans 99–170 (VLIKTIERTK…DIFDFILEKF (72 aa)).

This sequence belongs to the DENR family. Interacts with the 40S ribosomal subunit.

The protein localises to the cytoplasm. This chain is Translation machinery-associated protein 22 (tma22), found in Schizosaccharomyces pombe (strain 972 / ATCC 24843) (Fission yeast).